Reading from the N-terminus, the 318-residue chain is uncharacterized protein (318 aa).

Residues Leu67 to Glu157 adopt a coiled-coil conformation. A disordered region spans residues Glu172 to Leu318. Composition is skewed to basic and acidic residues over residues Asn175 to Lys193 and Lys219 to Ser236. The segment covering Val237–Thr248 has biased composition (polar residues). Basic and acidic residues-rich tracts occupy residues Ser249–Ala274 and Ser300–Gly310.

This is an uncharacterized protein from Staphylococcus aureus (strain Mu50 / ATCC 700699).